The chain runs to 601 residues: UBA domain-containing protein 3 (601 aa).

The region spanning 7 to 129 is the Arf-GAP domain; that stretch reads ETAIRELVQS…LFLDENHSTN (123 aa). Disordered regions lie at residues 123–158 and 289–310; these read DENH…KSRY and EPNQ…SSMG. Over residues 139-156 the composition is skewed to low complexity; sequence TKSSSQSSPMASTSTSKS. Residues 157–197 enclose the UBA domain; the sequence is RYADSLSTLHDMGFSDDSVNTHALEETNGDVTRAIEKIVQH.

This chain is UBA domain-containing protein 3 (ucp3), found in Schizosaccharomyces pombe (strain 972 / ATCC 24843) (Fission yeast).